The sequence spans 544 residues: MFS-type transporter prx5 (544 aa).

The disordered stretch occupies residues 1–28 (MAVDTEKDSVQAGSPMETPGSPVDETTE). 13 helical membrane-spanning segments follow: residues 36-56 (WIVSMILSCGYGLSFWPIPVV), 90-110 (LDHLCFLDLVCFIGHIVVASA), 116-136 (VIAGLVVSGFGGANCQMAAFA), 148-168 (IGVVIADLTVYIAVIIAPVTA), 178-198 (AWNFWGVAIFQGLSFFGLLFL), 221-241 (GAFLFIGGAVPFLMGIVWAGV), 249-269 (VVAPLVVGAAVLVCFALWESF), 290-310 (FTAPVIALGVVNMFYYSSSIL), 330-350 (VILSLPQGFAIFFGAMLLTCF), 361-381 (LTGSVFVMVVFGSLLGIVTPT), 387-407 (IAFIFLSQAGFGWALYLSIAI), 418-438 (GVSGGISGCIRFAAGAVATSI), and 505-525 (AIFVVAMVSMAFGILGLAACL).

It belongs to the major facilitator superfamily.

The protein resides in the cell membrane. In terms of biological role, MFS-type transporter; part of the gene cluster that mediates the biosynthesis of PR-toxin, a bicyclic sesquiterpene belonging to the eremophilane class and acting as a mycotoxin. This chain is MFS-type transporter prx5, found in Penicillium rubens (strain ATCC 28089 / DSM 1075 / NRRL 1951 / Wisconsin 54-1255) (Penicillium chrysogenum).